The chain runs to 261 residues: Endomucin (261 aa).

The first 18 residues, 1-18 (MELLQVTILFLLPSICSS), serve as a signal peptide directing secretion. N-linked (GlcNAc...) asparagine glycosylation is found at asparagine 19, asparagine 28, asparagine 98, and asparagine 104. The Extracellular portion of the chain corresponds to 19 to 190 (NSTGVLEAAN…TSATSRSYSS (172 aa)). Composition is skewed to polar residues over residues 118–134 (TLQS…SIKT) and 146–171 (ASPS…SQVI). A disordered region spans residues 118 to 183 (TLQSSKPKTE…EGGKNASTSA (66 aa)). 2 N-linked (GlcNAc...) asparagine glycosylation sites follow: asparagine 164 and asparagine 178. A helical transmembrane segment spans residues 191-211 (IILPVVIALIVITLSVFVLVG). At 212 to 261 (LYRMCWKADPGTPENGNDQPQSDKESVKLLTVKTISHESGEHSAQGKTKN) the chain is on the cytoplasmic side. Phosphoserine is present on serine 237.

Highly O-glycosylated. Sialic acid-rich glycoprotein. Expressed in heart, kidney and lung.

The protein localises to the cell membrane. It is found in the membrane. The protein resides in the secreted. Endothelial sialomucin, also called endomucin or mucin-like sialoglycoprotein, which interferes with the assembly of focal adhesion complexes and inhibits interaction between cells and the extracellular matrix. In Homo sapiens (Human), this protein is Endomucin (EMCN).